Reading from the N-terminus, the 339-residue chain is UDP-N-acetylenolpyruvoylglucosamine reductase (339 aa).

The FAD-binding PCMH-type domain occupies 19-189 (VDVQARLFAE…LRVRFKLSRV (171 aa)). Arg166 is a catalytic residue. The Proton donor role is filled by Ser239. Glu335 is an active-site residue.

This sequence belongs to the MurB family. FAD serves as cofactor.

Its subcellular location is the cytoplasm. The enzyme catalyses UDP-N-acetyl-alpha-D-muramate + NADP(+) = UDP-N-acetyl-3-O-(1-carboxyvinyl)-alpha-D-glucosamine + NADPH + H(+). The protein operates within cell wall biogenesis; peptidoglycan biosynthesis. In terms of biological role, cell wall formation. This chain is UDP-N-acetylenolpyruvoylglucosamine reductase, found in Pseudomonas syringae pv. syringae (strain B728a).